A 108-amino-acid polypeptide reads, in one-letter code: ATP-dependent Clp protease adapter protein ClpS (108 aa).

Belongs to the ClpS family. As to quaternary structure, binds to the N-terminal domain of the chaperone ClpA.

Functionally, involved in the modulation of the specificity of the ClpAP-mediated ATP-dependent protein degradation. The chain is ATP-dependent Clp protease adapter protein ClpS from Mycobacterium leprae (strain TN).